A 423-amino-acid polypeptide reads, in one-letter code: Polyglutamylase complex subunit TTLL1 (423 aa).

In terms of domain architecture, TTL spans 1–367 (MAGKVKWVTD…NGEIPDCKWN (367 aa)). Residues Lys138, 144–145 (QG), 181–184 (SLYI), and 194–196 (KFD) each bind ATP. Gln144 is an a protein binding site. Residue Arg220 coordinates L-glutamate. An ATP-binding site is contributed by 241 to 242 (TN). Position 259 (Lys259) interacts with L-glutamate. The Mg(2+) site is built by Asp313, Glu326, and Asn328. Residue Lys344 coordinates L-glutamate. Residues 391–423 (GAERELRSRPGQSLGPKGSRLRDAGRTVLTTWK) form a disordered region.

Belongs to the tubulin polyglutamylase family. Part of the neuronal tubulin polyglutamylase complex which contains TPGS1, TPGS2, TTLL1, LRRC49 and NICN1. Interacts with PCM1, CSTPP1 and LRRC49. Requires Mg(2+) as cofactor.

It is found in the cytoplasm. Its subcellular location is the cytoskeleton. The protein resides in the cilium basal body. The protein localises to the cilium axoneme. It localises to the cell projection. It is found in the cilium. Its subcellular location is the flagellum. The catalysed reaction is (L-glutamyl)(n)-gamma-L-glutamyl-L-glutamyl-[protein] + L-glutamate + ATP = (L-glutamyl)(n+1)-gamma-L-glutamyl-L-glutamyl-[protein] + ADP + phosphate + H(+). Catalytic subunit of a polyglutamylase complex which modifies tubulin, generating side chains of glutamate on the gamma-carboxyl group of specific glutamate residues within the C-terminal tail of tubulin. Probably involved in the side-chain elongation step of the polyglutamylation reaction rather than the initiation step. Modifies both alpha- and beta-tubulins with a preference for the alpha-tail. Unlike most polyglutamylases of the tubulin--tyrosine ligase family, only displays a catalytic activity when in complex with other proteins as it is most likely lacking domains important for autonomous activity. Part of the neuronal tubulin polyglutamylase complex. Mediates cilia and flagella polyglutamylation which is essential for their biogenesis and motility. Involved in respiratory motile cilia function through the regulation of beating asymmetry. Essential for sperm flagella biogenesis, motility and male fertility. Involved in KLF4 glutamylation which impedes its ubiquitination, thereby leading to somatic cell reprogramming, pluripotency maintenance and embryogenesis. The protein is Polyglutamylase complex subunit TTLL1 (TTLL1) of Bos taurus (Bovine).